Reading from the N-terminus, the 261-residue chain is Proteasome subunit alpha type-4 (261 aa).

A phosphoserine mark is found at Ser-13 and Ser-75. Lys-127 is modified (N6-acetyllysine). Ser-173 carries the phosphoserine modification. Lys-176 bears the N6-acetyllysine mark. The disordered stretch occupies residues 240–261 (HEEEEAKAEREKKEKEQKEKDK).

It belongs to the peptidase T1A family. As to quaternary structure, the 26S proteasome consists of a 20S proteasome core and two 19S regulatory subunits. The 20S proteasome core is a barrel-shaped complex made of 28 subunits that are arranged in four stacked rings. The two outer rings are each formed by seven alpha subunits, and the two inner rings are formed by seven beta subunits. The proteolytic activity is exerted by three beta-subunits PSMB5, PSMB6 and PSMB7.

It is found in the cytoplasm. It localises to the nucleus. Component of the 20S core proteasome complex involved in the proteolytic degradation of most intracellular proteins. This complex plays numerous essential roles within the cell by associating with different regulatory particles. Associated with two 19S regulatory particles, forms the 26S proteasome and thus participates in the ATP-dependent degradation of ubiquitinated proteins. The 26S proteasome plays a key role in the maintenance of protein homeostasis by removing misfolded or damaged proteins that could impair cellular functions, and by removing proteins whose functions are no longer required. Associated with the PA200 or PA28, the 20S proteasome mediates ubiquitin-independent protein degradation. This type of proteolysis is required in several pathways including spermatogenesis (20S-PA200 complex) or generation of a subset of MHC class I-presented antigenic peptides (20S-PA28 complex). The protein is Proteasome subunit alpha type-4 (PSMA4) of Macaca fascicularis (Crab-eating macaque).